The chain runs to 560 residues: Membrane protein insertase YidC (560 aa).

The next 6 helical transmembrane spans lie at 5 to 25, 334 to 354, 357 to 377, 431 to 451, 476 to 496, and 522 to 542; these read IINL…WQYF, AIDF…MNFF, YVGN…LLMF, LPIL…YVTI, LFGL…WPIL, and FMPL…LIYW.

Belongs to the OXA1/ALB3/YidC family. Type 1 subfamily. Interacts with the Sec translocase complex via SecD. Specifically interacts with transmembrane segments of nascent integral membrane proteins during membrane integration.

It is found in the cell inner membrane. In terms of biological role, required for the insertion and/or proper folding and/or complex formation of integral membrane proteins into the membrane. Involved in integration of membrane proteins that insert both dependently and independently of the Sec translocase complex, as well as at least some lipoproteins. Aids folding of multispanning membrane proteins. The protein is Membrane protein insertase YidC of Rickettsia prowazekii (strain Madrid E).